The following is an 82-amino-acid chain: Small ribosomal subunit protein bS16 (82 aa).

The protein belongs to the bacterial ribosomal protein bS16 family.

This is Small ribosomal subunit protein bS16 from Sodalis glossinidius (strain morsitans).